A 191-amino-acid chain; its full sequence is Cytochrome c oxidase subunit 6b-1 (191 aa).

Residues 1–14 (MADAVNAQTPSLSE) show a composition bias toward polar residues. Positions 1–126 (MADAVNAQTP…IKLETAPADF (126 aa)) are disordered. An N-acetylalanine modification is found at A2. Composition is skewed to basic and acidic residues over residues 16–37 (YHLEKEVKQDTSAKPVEVKEVA) and 45–56 (EEVKTEQAKEES). Over residues 72–98 (APESTEVASEAPAAAEDNAEETPAAAE) the composition is skewed to low complexity. The span at 99–114 (ENNDENASEEVAEETP) shows a compositional bias: acidic residues. A CHCH domain is found at 134–177 (TRHCFTRYVEYHRCVAAKGDDAPECDKFAKFYRSLCPSEWVDRW). Residues 137–147 (CFTRYVEYHRC) carry the Cx9C motif motif. 2 disulfide bridges follow: C137–C169 and C147–C158. The Cx10C motif motif lies at 158-169 (CDKFAKFYRSLC).

This sequence belongs to the cytochrome c oxidase subunit 6B (TC 3.D.4.8) family. In terms of tissue distribution, expressed in the whole plant.

It is found in the mitochondrion. Functionally, this protein is one of the nuclear-coded polypeptide chains of cytochrome c oxidase, the terminal oxidase in mitochondrial electron transport. This protein may be one of the heme-binding subunits of the oxidase. The chain is Cytochrome c oxidase subunit 6b-1 (COX6B-1) from Arabidopsis thaliana (Mouse-ear cress).